Here is a 508-residue protein sequence, read N- to C-terminus: Flavonoid 3'-monooxygenase CYP75B137 (508 aa).

A helical transmembrane segment spans residues 2–22; the sequence is LTFFFLWISTLLLSSFIVYLL. Cysteine 445 provides a ligand contact to heme.

Belongs to the cytochrome P450 family. The cofactor is heme. Expressed in young cromes.

It is found in the membrane. It carries out the reaction a 3'-unsubstituted flavone + reduced [NADPH--hemoprotein reductase] + O2 = a 3'-hydroxyflavone + oxidized [NADPH--hemoprotein reductase] + H2O + H(+). The enzyme catalyses (2S)-naringenin + reduced [NADPH--hemoprotein reductase] + O2 = (S)-eriodictyol + oxidized [NADPH--hemoprotein reductase] + H2O + H(+). The catalysed reaction is (2R,3R)-dihydrokaempferol + reduced [NADPH--hemoprotein reductase] + O2 = (2R,3R)-dihydroquercetin + oxidized [NADPH--hemoprotein reductase] + H2O + H(+). It catalyses the reaction kaempferol + reduced [NADPH--hemoprotein reductase] + O2 = quercetin + oxidized [NADPH--hemoprotein reductase] + H2O + H(+). It functions in the pathway flavonoid metabolism. Its function is as follows. Flavonoid 3'-hydroxylase that catalyzes the 3'-hydroxylation of flavanones, dihydroflavonols and flavonols. Converts narigenin to eriodictyol, dihydrokaempferol to dihydroquercetin and kaempferol to quercetin. The protein is Flavonoid 3'-monooxygenase CYP75B137 of Crocosmia x crocosmiiflora (Montbretia).